A 419-amino-acid chain; its full sequence is eIF5-mimic protein 2 (419 aa).

At methionine 1 the chain carries N-acetylmethionine. A compositionally biased stretch (polar residues) spans 1 to 15 (MNNQKQQKPTLSGQR). A disordered region spans residues 1 to 26 (MNNQKQQKPTLSGQRFKTRKRDEKER). The residue at position 12 (serine 12) is a Phosphoserine. Positions 247–414 (NQQTIGARKE…KNAEEESESE (168 aa)) constitute a W2 domain. Lysine 368 participates in a covalent cross-link: Glycyl lysine isopeptide (Lys-Gly) (interchain with G-Cter in SUMO2). Phosphoserine occurs at positions 411 and 413.

The protein belongs to the BZW family.

Translation initiation regulator which represses repeat-associated non-AUG (RAN) initiated translation probably by acting as a competitive inhibitor of eukaryotic translation initiation factor 5 (EIF5) function. Enhances histone H4 gene transcription but does not seem to bind DNA directly. The sequence is that of eIF5-mimic protein 2 (BZW1) from Pongo abelii (Sumatran orangutan).